We begin with the raw amino-acid sequence, 300 residues long: 7-methylguanosine phosphate-specific 5'-nucleotidase (300 aa).

Aspartate 41 (nucleophile) is an active-site residue. Positions 41 and 43 each coordinate Mg(2+). The Proton donor role is filled by aspartate 43. Glutamate 88 serves as a coordination point for CMP. Glutamate 88 serves as a coordination point for N(7)-methyl-GMP. Residues 156 to 157 (SA) and lysine 205 each bind substrate. Aspartate 230 is a Mg(2+) binding site. Lysine 256 bears the N6-acetyllysine mark.

Belongs to the pyrimidine 5'-nucleotidase family. Monomer.

Its subcellular location is the cytoplasm. It carries out the reaction N(7)-methyl-GMP + H2O = N(7)-methylguanosine + phosphate. The enzyme catalyses CMP + H2O = cytidine + phosphate. It catalyses the reaction a ribonucleoside 5'-phosphate + H2O = a ribonucleoside + phosphate. Functionally, specifically hydrolyzes 7-methylguanosine monophosphate (m(7)GMP) to 7-methylguanosine and inorganic phosphate. The specific activity for m(7)GMP may protect cells against undesired salvage of m(7)GMP and its incorporation into nucleic acids. Also has weak activity for CMP. UMP and purine nucleotides are poor substrates. The sequence is that of 7-methylguanosine phosphate-specific 5'-nucleotidase (Nt5c3b) from Rattus norvegicus (Rat).